We begin with the raw amino-acid sequence, 255 residues long: uncharacterized protein (255 aa).

The 69-residue stretch at Asp-4–Gly-72 folds into the J domain. Composition is skewed to basic residues over residues Phe-167–Ala-178 and Thr-243–Glu-255. 2 disordered regions span residues Phe-167–Leu-215 and Leu-230–Glu-255.

It belongs to the DnaJ family.

The protein localises to the nucleus. It is found in the nucleolus. This is an uncharacterized protein from Schizosaccharomyces pombe (strain 972 / ATCC 24843) (Fission yeast).